The chain runs to 185 residues: Orotate phosphoribosyltransferase (185 aa).

Residues R98, K99, K102, H104, and 128–136 (EDVTTTGGS) contribute to the 5-phospho-alpha-D-ribose 1-diphosphate site. The orotate site is built by T132 and R160.

It belongs to the purine/pyrimidine phosphoribosyltransferase family. PyrE subfamily. In terms of assembly, homodimer. Mg(2+) serves as cofactor.

It catalyses the reaction orotidine 5'-phosphate + diphosphate = orotate + 5-phospho-alpha-D-ribose 1-diphosphate. It participates in pyrimidine metabolism; UMP biosynthesis via de novo pathway; UMP from orotate: step 1/2. Functionally, catalyzes the transfer of a ribosyl phosphate group from 5-phosphoribose 1-diphosphate to orotate, leading to the formation of orotidine monophosphate (OMP). This is Orotate phosphoribosyltransferase from Bradyrhizobium sp. (strain BTAi1 / ATCC BAA-1182).